Reading from the N-terminus, the 177-residue chain is Large ribosomal subunit protein uL5 (177 aa).

Belongs to the universal ribosomal protein uL5 family. As to quaternary structure, part of the 50S ribosomal subunit; part of the 5S rRNA/L5/L18/L25 subcomplex. Contacts the 5S rRNA and the P site tRNA. Forms a bridge to the 30S subunit in the 70S ribosome.

Its function is as follows. This is one of the proteins that bind and probably mediate the attachment of the 5S RNA into the large ribosomal subunit, where it forms part of the central protuberance. In the 70S ribosome it contacts protein S13 of the 30S subunit (bridge B1b), connecting the 2 subunits; this bridge is implicated in subunit movement. Contacts the P site tRNA; the 5S rRNA and some of its associated proteins might help stabilize positioning of ribosome-bound tRNAs. This is Large ribosomal subunit protein uL5 from Wolbachia pipientis wMel.